We begin with the raw amino-acid sequence, 378 residues long: Spermidine/putrescine import ATP-binding protein PotA (378 aa).

The region spanning valine 18–isoleucine 248 is the ABC transporter domain. Glycine 50–threonine 57 is an ATP binding site.

Belongs to the ABC transporter superfamily. Spermidine/putrescine importer (TC 3.A.1.11.1) family. As to quaternary structure, the complex is composed of two ATP-binding proteins (PotA), two transmembrane proteins (PotB and PotC) and a solute-binding protein (PotD).

It is found in the cell inner membrane. It catalyses the reaction ATP + H2O + polyamine-[polyamine-binding protein]Side 1 = ADP + phosphate + polyamineSide 2 + [polyamine-binding protein]Side 1.. Its function is as follows. Part of the ABC transporter complex PotABCD involved in spermidine/putrescine import. Responsible for energy coupling to the transport system. The protein is Spermidine/putrescine import ATP-binding protein PotA of Salmonella paratyphi A (strain ATCC 9150 / SARB42).